Consider the following 242-residue polypeptide: ATP synthase subunit a, chloroplastic (242 aa).

The next 5 membrane-spanning stretches (helical) occupy residues 34-54 (GQVL…AVLG), 93-113 (VPFI…GAII), 132-152 (INTT…AGLS), 188-210 (LFGN…PLVI), and 222-242 (GSVQ…EALE).

The protein belongs to the ATPase A chain family. In terms of assembly, F-type ATPases have 2 components, CF(1) - the catalytic core - and CF(0) - the membrane proton channel. CF(1) has five subunits: alpha(3), beta(3), gamma(1), delta(1), epsilon(1). CF(0) has four main subunits: a, b, b' and c.

Its subcellular location is the plastid. The protein localises to the chloroplast thylakoid membrane. Functionally, key component of the proton channel; it plays a direct role in the translocation of protons across the membrane. The protein is ATP synthase subunit a, chloroplastic of Trieres chinensis (Marine centric diatom).